Consider the following 271-residue polypeptide: Putative phosphoenolpyruvate synthase regulatory protein (271 aa).

151–158 (GVSRSGKT) contacts ADP.

It belongs to the pyruvate, phosphate/water dikinase regulatory protein family. PSRP subfamily.

It carries out the reaction [pyruvate, water dikinase] + ADP = [pyruvate, water dikinase]-phosphate + AMP + H(+). The catalysed reaction is [pyruvate, water dikinase]-phosphate + phosphate + H(+) = [pyruvate, water dikinase] + diphosphate. Its function is as follows. Bifunctional serine/threonine kinase and phosphorylase involved in the regulation of the phosphoenolpyruvate synthase (PEPS) by catalyzing its phosphorylation/dephosphorylation. The chain is Putative phosphoenolpyruvate synthase regulatory protein from Burkholderia multivorans (strain ATCC 17616 / 249).